Reading from the N-terminus, the 190-residue chain is Holliday junction branch migration complex subunit RuvA (190 aa).

Residues 1–64 (MIGRITGTLI…EDAHLLYGFG (64 aa)) are domain I. The tract at residues 65-137 (TASERAAFRE…MRGKLGADIG (73 aa)) is domain II. A flexible linker region spans residues 137–141 (GATPH). Residues 142–190 (AVPDSQSDILNALLALGYSEKESLAALKTLPEGLGVSDGIRQALKALAR) form a domain III region.

It belongs to the RuvA family. In terms of assembly, homotetramer. Forms an RuvA(8)-RuvB(12)-Holliday junction (HJ) complex. HJ DNA is sandwiched between 2 RuvA tetramers; dsDNA enters through RuvA and exits via RuvB. An RuvB hexamer assembles on each DNA strand where it exits the tetramer. Each RuvB hexamer is contacted by two RuvA subunits (via domain III) on 2 adjacent RuvB subunits; this complex drives branch migration. In the full resolvosome a probable DNA-RuvA(4)-RuvB(12)-RuvC(2) complex forms which resolves the HJ.

It is found in the cytoplasm. In terms of biological role, the RuvA-RuvB-RuvC complex processes Holliday junction (HJ) DNA during genetic recombination and DNA repair, while the RuvA-RuvB complex plays an important role in the rescue of blocked DNA replication forks via replication fork reversal (RFR). RuvA specifically binds to HJ cruciform DNA, conferring on it an open structure. The RuvB hexamer acts as an ATP-dependent pump, pulling dsDNA into and through the RuvAB complex. HJ branch migration allows RuvC to scan DNA until it finds its consensus sequence, where it cleaves and resolves the cruciform DNA. This chain is Holliday junction branch migration complex subunit RuvA, found in Bordetella avium (strain 197N).